Here is a 313-residue protein sequence, read N- to C-terminus: Intelectin-like protein (313 aa).

One can recognise a Fibrinogen C-terminal domain in the interval 33–251; sequence TSCCSQTSPG…NNEKAPMALC (219 aa). His-86, Glu-87, Asn-89, Gly-92, Gly-97, Asp-98, and Asp-133 together coordinate Ca(2+). 3 cysteine pairs are disulfide-bonded: Cys-94-Cys-280, Cys-199-Cys-259, and Cys-251-Cys-265. Positions 260, 262, 274, and 282 each coordinate Ca(2+). A carbohydrate-binding positions include 262–263 and Glu-274; that span reads EH.

As to quaternary structure, monomer, homodimer, homotrimer and homotetramer. Mostly monomeric or dimeric.

The protein localises to the secreted. Its function is as follows. Binds mannan, mannose and, to a lesser degree, D-lactose, N-acetylgalactosamine, N-acetylglucosamine and beta-D-glucose. The sequence is that of Intelectin-like protein from Alligator mississippiensis (American alligator).